The following is a 100-amino-acid chain: Large ribosomal subunit protein eL21 (100 aa).

The interval 1–21 (MVKRTHGYRYKSRKLLRKKPR) is disordered.

Belongs to the eukaryotic ribosomal protein eL21 family.

The chain is Large ribosomal subunit protein eL21 from Pyrobaculum islandicum (strain DSM 4184 / JCM 9189 / GEO3).